We begin with the raw amino-acid sequence, 245 residues long: MAPK-interacting and spindle-stabilizing protein-like (245 aa).

Residues 1–245 are disordered; the sequence is MSDEFSLADA…PMPGGPHSYH (245 aa). Serine 2 is subject to N-acetylserine. Phosphoserine is present on residues serine 2, serine 6, and serine 15. The segment covering 17–26 has biased composition (polar residues); sequence AKTSAVSNTK. Residues 34–51 show a composition bias toward low complexity; that stretch reads WPGSNPWNNPSAPSSVPS. 3 stretches are compositionally biased toward pro residues: residues 74-127, 164-190, and 198-207; these read SVPP…PELP, PNMP…PPVP, and AWGPPAPYPA.

It belongs to the MISS family.

This Homo sapiens (Human) protein is MAPK-interacting and spindle-stabilizing protein-like (MAPK1IP1L).